Reading from the N-terminus, the 178-residue chain is ATP-dependent protease subunit HslV (178 aa).

The active site involves T7. Positions 162, 165, and 168 each coordinate Na(+).

The protein belongs to the peptidase T1B family. HslV subfamily. In terms of assembly, a double ring-shaped homohexamer of HslV is capped on each side by a ring-shaped HslU homohexamer. The assembly of the HslU/HslV complex is dependent on binding of ATP.

The protein localises to the cytoplasm. It carries out the reaction ATP-dependent cleavage of peptide bonds with broad specificity.. Allosterically activated by HslU binding. Protease subunit of a proteasome-like degradation complex believed to be a general protein degrading machinery. The chain is ATP-dependent protease subunit HslV from Ralstonia nicotianae (strain ATCC BAA-1114 / GMI1000) (Ralstonia solanacearum).